Reading from the N-terminus, the 177-residue chain is Inorganic pyrophosphatase (177 aa).

Lysine 31, arginine 45, and tyrosine 57 together coordinate substrate. Residues aspartate 67, aspartate 72, and aspartate 104 each coordinate Mg(2+). Tyrosine 141 contacts substrate.

This sequence belongs to the PPase family. As to quaternary structure, homohexamer. Requires Mg(2+) as cofactor.

Its subcellular location is the cytoplasm. It carries out the reaction diphosphate + H2O = 2 phosphate + H(+). Its function is as follows. Catalyzes the hydrolysis of inorganic pyrophosphate (PPi) forming two phosphate ions. The protein is Inorganic pyrophosphatase of Halobacterium salinarum (strain ATCC 700922 / JCM 11081 / NRC-1) (Halobacterium halobium).